Consider the following 120-residue polypeptide: MAENRRIQKVNSLIREAIANVILKDVKHPKISNRWITVTRVCLSKDLHTARVYVSIMPHENTSAETLKALKASAGFIAYRASKGVFLKYFPEISFYLEDIFSPQDHIENLLWKIREQDKN.

It belongs to the RbfA family. As to quaternary structure, monomer. Binds 30S ribosomal subunits, but not 50S ribosomal subunits or 70S ribosomes.

Its subcellular location is the cytoplasm. In terms of biological role, one of several proteins that assist in the late maturation steps of the functional core of the 30S ribosomal subunit. Associates with free 30S ribosomal subunits (but not with 30S subunits that are part of 70S ribosomes or polysomes). Required for efficient processing of 16S rRNA. May interact with the 5'-terminal helix region of 16S rRNA. The polypeptide is Ribosome-binding factor A (Chlamydia felis (strain Fe/C-56) (Chlamydophila felis)).